A 414-amino-acid chain; its full sequence is DNA polymerase IV (414 aa).

The UmuC domain occupies 8-189; the sequence is IFHIDMNSFY…LPIEEMHGIG (182 aa). Mg(2+)-binding residues include D12 and D108. Residue E109 is part of the active site. Positions 394-414 are disordered; the sequence is EESKTRGTSFNRDFFQDEKKR.

The protein belongs to the DNA polymerase type-Y family. As to quaternary structure, monomer. It depends on Mg(2+) as a cofactor.

The protein localises to the cytoplasm. The enzyme catalyses DNA(n) + a 2'-deoxyribonucleoside 5'-triphosphate = DNA(n+1) + diphosphate. In terms of biological role, poorly processive, error-prone DNA polymerase involved in untargeted mutagenesis. Copies undamaged DNA at stalled replication forks, which arise in vivo from mismatched or misaligned primer ends. These misaligned primers can be extended by PolIV. Exhibits no 3'-5' exonuclease (proofreading) activity. May be involved in translesional synthesis, in conjunction with the beta clamp from PolIII. In Bacillus velezensis (strain DSM 23117 / BGSC 10A6 / LMG 26770 / FZB42) (Bacillus amyloliquefaciens subsp. plantarum), this protein is DNA polymerase IV.